The primary structure comprises 344 residues: 2-aminoethylphosphonate--pyruvate transaminase (344 aa).

Lys194 is modified (N6-(pyridoxal phosphate)lysine).

The protein belongs to the class-V pyridoxal-phosphate-dependent aminotransferase family. PhnW subfamily. As to quaternary structure, homodimer. It depends on pyridoxal 5'-phosphate as a cofactor.

The catalysed reaction is (2-aminoethyl)phosphonate + pyruvate = phosphonoacetaldehyde + L-alanine. Functionally, involved in phosphonate degradation. This Bacillus cereus protein is 2-aminoethylphosphonate--pyruvate transaminase.